The sequence spans 209 residues: uncharacterized protein (209 aa).

The MPN domain maps to 1 to 67; sequence MEILPKYKPE…LIMYNYWTID (67 aa). Histidine 17, histidine 19, and aspartate 30 together coordinate Zn(2+). Positions 17–30 match the JAMM motif motif; sequence HTHPKGPAEPSIND.

This is an uncharacterized protein from Acidianus convivator (ATV).